Reading from the N-terminus, the 282-residue chain is 3-oxoadipate CoA-transferase subunit A (282 aa).

It belongs to the 3-oxoacid CoA-transferase subunit A family. In terms of assembly, heterotetramer composed of 2 A and 2 B subunits.

It carries out the reaction 3-oxoadipate + succinyl-CoA = 3-oxoadipyl-CoA + succinate. It functions in the pathway aromatic compound metabolism; beta-ketoadipate pathway; acetyl-CoA and succinyl-CoA from 3-oxoadipate: step 1/2. Its function is as follows. Catalyzes the CoA transfer from succinate to 3-oxoadipate (beta-ketoadipate). This is 3-oxoadipate CoA-transferase subunit A (catI) from Pseudomonas knackmussii (strain DSM 6978 / CCUG 54928 / LMG 23759 / B13).